The sequence spans 254 residues: 5-oxoprolinase subunit A (254 aa).

This sequence belongs to the LamB/PxpA family. In terms of assembly, forms a complex composed of PxpA, PxpB and PxpC.

The catalysed reaction is 5-oxo-L-proline + ATP + 2 H2O = L-glutamate + ADP + phosphate + H(+). In terms of biological role, catalyzes the cleavage of 5-oxoproline to form L-glutamate coupled to the hydrolysis of ATP to ADP and inorganic phosphate. This is 5-oxoprolinase subunit A from Burkholderia lata (strain ATCC 17760 / DSM 23089 / LMG 22485 / NCIMB 9086 / R18194 / 383).